A 334-amino-acid polypeptide reads, in one-letter code: Phosphate acyltransferase (334 aa).

Belongs to the PlsX family. Homodimer. Probably interacts with PlsY.

It localises to the cytoplasm. It carries out the reaction a fatty acyl-[ACP] + phosphate = an acyl phosphate + holo-[ACP]. It participates in lipid metabolism; phospholipid metabolism. Catalyzes the reversible formation of acyl-phosphate (acyl-PO(4)) from acyl-[acyl-carrier-protein] (acyl-ACP). This enzyme utilizes acyl-ACP as fatty acyl donor, but not acyl-CoA. This chain is Phosphate acyltransferase, found in Caldicellulosiruptor saccharolyticus (strain ATCC 43494 / DSM 8903 / Tp8T 6331).